The following is a 217-amino-acid chain: ATP-dependent Clp protease proteolytic subunit (217 aa).

The Nucleophile role is filled by Ser-119. Residue His-144 is part of the active site.

It belongs to the peptidase S14 family. As to quaternary structure, fourteen ClpP subunits assemble into 2 heptameric rings which stack back to back to give a disk-like structure with a central cavity, resembling the structure of eukaryotic proteasomes.

It is found in the cytoplasm. The catalysed reaction is Hydrolysis of proteins to small peptides in the presence of ATP and magnesium. alpha-casein is the usual test substrate. In the absence of ATP, only oligopeptides shorter than five residues are hydrolyzed (such as succinyl-Leu-Tyr-|-NHMec, and Leu-Tyr-Leu-|-Tyr-Trp, in which cleavage of the -Tyr-|-Leu- and -Tyr-|-Trp bonds also occurs).. Cleaves peptides in various proteins in a process that requires ATP hydrolysis. Has a chymotrypsin-like activity. Plays a major role in the degradation of misfolded proteins. The protein is ATP-dependent Clp protease proteolytic subunit of Bordetella petrii (strain ATCC BAA-461 / DSM 12804 / CCUG 43448).